Here is a 129-residue protein sequence, read N- to C-terminus: Photosystem II extrinsic protein V (129 aa).

Cys-35, Cys-38, His-39, and His-90 together coordinate heme c.

Belongs to the cytochrome c family. PsbV subfamily. In terms of assembly, PSII is composed of 1 copy each of membrane proteins PsbA, PsbB, PsbC, PsbD, PsbE, PsbF, PsbH, PsbI, PsbJ, PsbK, PsbL, PsbM, PsbT, PsbX, PsbY, PsbZ, Psb30/Ycf12, peripheral proteins PsbO, CyanoQ (PsbQ), PsbU, PsbV and a large number of cofactors. It forms dimeric complexes. Homodimer in crystal structure. It depends on heme c as a cofactor.

Its subcellular location is the cellular thylakoid membrane. One of the extrinsic, lumenal subunits of photosystem II (PSII). PSII is a light-driven water plastoquinone oxidoreductase, using light energy to abstract electrons from H(2)O, generating a proton gradient subsequently used for ATP formation. The extrinsic proteins stabilize the structure of photosystem II oxygen-evolving complex (OEC), the ion environment of oxygen evolution and protect the OEC against heat-induced inactivation. Low-potential cytochrome c that plays a role in the OEC of PSII. The sequence is that of Photosystem II extrinsic protein V from Limnospira maxima (Arthrospira maxima).